A 398-amino-acid chain; its full sequence is NADH-quinone oxidoreductase subunit D (398 aa).

Belongs to the complex I 49 kDa subunit family. NDH-1 is composed of 14 different subunits. Subunits NuoB, C, D, E, F, and G constitute the peripheral sector of the complex.

The protein localises to the cell inner membrane. The catalysed reaction is a quinone + NADH + 5 H(+)(in) = a quinol + NAD(+) + 4 H(+)(out). NDH-1 shuttles electrons from NADH, via FMN and iron-sulfur (Fe-S) centers, to quinones in the respiratory chain. The immediate electron acceptor for the enzyme in this species is believed to be ubiquinone. Couples the redox reaction to proton translocation (for every two electrons transferred, four hydrogen ions are translocated across the cytoplasmic membrane), and thus conserves the redox energy in a proton gradient. In Caulobacter vibrioides (strain ATCC 19089 / CIP 103742 / CB 15) (Caulobacter crescentus), this protein is NADH-quinone oxidoreductase subunit D.